Consider the following 260-residue polypeptide: DNA repair protein RecO (260 aa).

It belongs to the RecO family.

Its function is as follows. Involved in DNA repair and RecF pathway recombination. The chain is DNA repair protein RecO from Ligilactobacillus salivarius (strain UCC118) (Lactobacillus salivarius).